Consider the following 603-residue polypeptide: NADPH-dependent diflavin oxidoreductase 1 (603 aa).

In terms of domain architecture, Flavodoxin-like spans 8–152 (VLVLYGSETG…SFVRWTGRLY (145 aa)). Residues 14-19 (SETGNA), 61-64 (STTG), 99-108 (LGDSTYLKFN), and Glu-134 each bind FMN. The region spanning 210 to 457 (PDGWTATLVG…RKPVLSPIHG (248 aa)) is the FAD-binding FR-type domain. Residues Arg-358, 388–391 (RDFS), and 429–432 (GLCS) contribute to the FAD site. NADP(+) contacts are provided by residues Thr-472, 528-529 (SR), and 534-538 (KIYVQ). Trp-603 contacts FAD.

The protein belongs to the NADPH-dependent diflavin oxidoreductase NDOR1 family. This sequence in the N-terminal section; belongs to the flavodoxin family. It in the C-terminal section; belongs to the flavoprotein pyridine nucleotide cytochrome reductase family. In terms of assembly, interacts with DRE2; as part of the cytosolic iron-sulfur (Fe-S) protein assembly (CIA) machinery. It depends on FAD as a cofactor. The cofactor is FMN.

The protein resides in the cytoplasm. It localises to the mitochondrion. It carries out the reaction 2 oxidized [2Fe-2S]-[protein] + NADPH = 2 reduced [2Fe-2S]-[protein] + NADP(+) + H(+). NADPH-dependent reductase which is a central component of the cytosolic iron-sulfur (Fe-S) protein assembly (CIA) machinery. Transfers electrons from NADPH via its FAD and FMN prosthetic groups to the [2Fe-2S] cluster of DRE2, another key component of the CIA machinery. In turn, this reduced cluster provides electrons for assembly of cytosolic iron-sulfur cluster proteins. Positively controls H(2)O(2)-induced cell death. The sequence is that of NADPH-dependent diflavin oxidoreductase 1 from Gibberella zeae (strain ATCC MYA-4620 / CBS 123657 / FGSC 9075 / NRRL 31084 / PH-1) (Wheat head blight fungus).